A 136-amino-acid chain; its full sequence is MAHRVLVQVIFTGARVFGRAFTEAYKQTAAQMAKQGTSSAARSQGGMTNEYGGITLDESCKILNIEENGPEMNLDKVEQRFKYLFDINDKEKGGSFYLQSKIYRAAERLKWELAQREQADKGASAHPQDQQPGPQN.

The segment at 58–114 (ESCKILNIEENGPEMNLDKVEQRFKYLFDINDKEKGGSFYLQSKIYRAAERLKWELA) is J-like. The disordered stretch occupies residues 114-136 (AQREQADKGASAHPQDQQPGPQN). The span at 127–136 (PQDQQPGPQN) shows a compositional bias: polar residues.

This sequence belongs to the TIM16/PAM16 family. As to quaternary structure, heterodimer with PAM18. Component of the PAM complex, at least composed of mtHsp70, MGE1, TIM44, PAM16, PAM17 and PAM18.

Its subcellular location is the mitochondrion inner membrane. Its function is as follows. Essential component of the PAM complex, a complex required for the translocation of transit peptide-containing proteins from the inner membrane into the mitochondrial matrix in an ATP-dependent manner. In the complex, it is required to regulate activity of mtHSP70 (SSC1) via its interaction with PAM18/TIM14. May act by positioning PAM18/TIM14 in juxtaposition to mtHSP70 at the translocon to maximize ATPase stimulation. This Eremothecium gossypii (strain ATCC 10895 / CBS 109.51 / FGSC 9923 / NRRL Y-1056) (Yeast) protein is Mitochondrial import inner membrane translocase subunit TIM16 (PAM16).